The following is a 1132-amino-acid chain: Error-prone DNA polymerase (1132 aa).

This sequence belongs to the DNA polymerase type-C family. DnaE2 subfamily.

It localises to the cytoplasm. The catalysed reaction is DNA(n) + a 2'-deoxyribonucleoside 5'-triphosphate = DNA(n+1) + diphosphate. DNA polymerase involved in damage-induced mutagenesis and translesion synthesis (TLS). It is not the major replicative DNA polymerase. The protein is Error-prone DNA polymerase of Anaeromyxobacter dehalogenans (strain 2CP-C).